A 336-amino-acid polypeptide reads, in one-letter code: HTH-type transcriptional repressor PurR (336 aa).

The 55-residue stretch at 2–56 folds into the HTH lacI-type domain; it reads ATIKDVARLAGVSTTTVSHVINKTRFVAETTQEKVMEAVKQLNYAPSAVARSLKC. A DNA-binding region (H-T-H motif) is located at residues 4 to 23; sequence IKDVARLAGVSTTTVSHVIN. Residues 48–56 mediate DNA binding; sequence SAVARSLKC. Hypoxanthine-binding residues include Phe73, Lys189, Phe220, and Asp274.

In terms of assembly, homodimer.

Its pathway is purine metabolism; purine nucleotide biosynthesis [regulation]. Its function is as follows. Is the main repressor of the genes involved in the de novo synthesis of purine nucleotides, regulating purB, purC, purEK, purF, purHD, purL, purMN and guaBA expression. PurR is allosterically activated to bind its cognate DNA by binding the purine corepressors, hypoxanthine or guanine, thereby effecting transcription repression. This chain is HTH-type transcriptional repressor PurR, found in Vibrio cholerae serotype O1 (strain ATCC 39315 / El Tor Inaba N16961).